Consider the following 182-residue polypeptide: ADP-ribosylation factor-like protein 11 (182 aa).

Gly-2 carries the N-myristoyl glycine lipid modification. Residues 19–26 (GLDSAGKT), 63–67 (DVGGQ), and 122–125 (NKQE) each bind GTP.

The protein belongs to the small GTPase superfamily. Arf family.

May play a role in apoptosis. May act as a tumor suppressor. The polypeptide is ADP-ribosylation factor-like protein 11 (ARL11) (Bos taurus (Bovine)).